Consider the following 515-residue polypeptide: Lysine--tRNA ligase (515 aa).

Mg(2+)-binding residues include Glu425 and Glu432.

Belongs to the class-II aminoacyl-tRNA synthetase family. In terms of assembly, homodimer. Mg(2+) serves as cofactor.

The protein localises to the cytoplasm. The catalysed reaction is tRNA(Lys) + L-lysine + ATP = L-lysyl-tRNA(Lys) + AMP + diphosphate. The sequence is that of Lysine--tRNA ligase from Cupriavidus metallidurans (strain ATCC 43123 / DSM 2839 / NBRC 102507 / CH34) (Ralstonia metallidurans).